A 117-amino-acid chain; its full sequence is Small ribosomal subunit protein bS6 (117 aa).

The segment at 96–117 (HDEGPSVQMQKRDEREGRRERR) is disordered.

Belongs to the bacterial ribosomal protein bS6 family.

Binds together with bS18 to 16S ribosomal RNA. This chain is Small ribosomal subunit protein bS6, found in Jannaschia sp. (strain CCS1).